The sequence spans 565 residues: Inositol-3-phosphate synthase (565 aa).

Residues Gly70, Gly71, Asn72, Asn73, Asp144, Ser180, Ile181, Gln191, Arg194, Thr231, Ala232, Asn233, Thr234, Gly282, Ser283, Asp307, Ser310, Asn341, Asn342, Asp343, Lys356, Gly394, Asp395, Asp423, and Ser424 each contribute to the NAD(+) site. Ser536 is modified (phosphoserine). Residues 546-565 are disordered; that stretch reads LHANGHSNGSAKLATNGNGH. Residues 550-565 show a composition bias toward polar residues; the sequence is GHSNGSAKLATNGNGH.

This sequence belongs to the myo-inositol 1-phosphate synthase family. The cofactor is NAD(+). Higher expression in adult heads than bodies.

It localises to the cytoplasm. The enzyme catalyses D-glucose 6-phosphate = 1D-myo-inositol 3-phosphate. Its pathway is polyol metabolism; myo-inositol biosynthesis; myo-inositol from D-glucose 6-phosphate: step 1/2. Functionally, key enzyme in myo-inositol biosynthesis pathway that catalyzes the conversion of glucose 6-phosphate to 1-myo-inositol 1-phosphate in a NAD-dependent manner. Rate-limiting enzyme in the synthesis of all inositol-containing compounds. In Drosophila melanogaster (Fruit fly), this protein is Inositol-3-phosphate synthase (Inos).